We begin with the raw amino-acid sequence, 715 residues long: Tensin-4 (715 aa).

The signal sequence occupies residues 1–18 (MSQVMSSPLLAGGHAVSL). Position 82 is a phosphoserine (S82). 4 disordered regions span residues 159 to 183 (RCHD…RSGG), 195 to 251 (RSSS…SPLV), 291 to 364 (SLLH…CPPS), and 376 to 435 (LING…ARDM). Residues 197–206 (SSESLIFSGN) show a composition bias toward polar residues. S248 is subject to Phosphoserine. Residues 291 to 325 (SLLHSSNSSHQSSSRSLESPANSSSSLHSLGSVSL) are compositionally biased toward low complexity. The SH2 domain maps to 449–556 (WFKPNITREQ…ALPCKLTIPQ (108 aa)). Residues 582–705 (CHTLYLSSVS…QPASQVIGLV (124 aa)) enclose the PTB domain.

It belongs to the PTEN phosphatase protein family. Interacts (via SH2 domain) with Rho GTPase-activating protein DLC1 (via C-terminus); the interaction is independent of DLC1 tyrosine phosphorylation. Interacts with integrin ITGB1; the interaction displaces tensin TNS3 from the ITGB1 cytoplasmic tail and promotes ITGB1 stability. Interacts (via SH2 domain) with E3 ubiquitin-protein ligase CBL (phosphorylated on 'Tyr-774'); the interaction is enhanced in the presence of EGF and reduces interaction of CBL with EGFR. Interacts (via SH2 domain) with receptor tyrosine kinase MET (when phosphorylated); the interaction increases MET protein stability. Proteolytically cleaved by caspase-3 during apoptosis. As to expression, expressed at low levels in colon (at protein level). Expressed in prostate and placenta.

The protein resides in the cell junction. It localises to the focal adhesion. Its subcellular location is the cytoplasm. The protein localises to the cytoskeleton. In terms of biological role, promotes EGF-induced cell migration by displacing tensin TNS3 from the cytoplasmic tail of integrin ITGB1 which results in dissociation of TNS3 from focal adhesions, disassembly of actin stress fibers and initiation of cell migration. Suppresses ligand-induced degradation of EGFR by reducing EGFR ubiquitination in the presence of EGF. Increases MET protein stability by inhibiting MET endocytosis and subsequent lysosomal degradation which leads to increased cell survival, proliferation and migration. The chain is Tensin-4 (TNS4) from Homo sapiens (Human).